The primary structure comprises 219 residues: DAN domain family member 5 (219 aa).

Residues 1–19 (MLLFRAASLLPLLCFTVGA) form the signal peptide. Intrachain disulfides connect C118–C165, C132–C179, C142–C195, and C146–C197. Residues 118 to 198 (CHALPFIQNV…VELVEECECE (81 aa)) enclose the CTCK domain.

This sequence belongs to the DAN family. As to quaternary structure, interacts with nr1-a.

It localises to the secreted. In terms of biological role, plays an important role in regulating the left-right axis by blocking a tgfb1 cascade in the right posterior paraxial mesoderm. Functions as an inhibitor of bmp, tgfb1, nodal, activin and wnt signaling in the ectoderm. May inhibit mesodermal signals, probably through an inhibition of nodal/activin pathways. Seems to regulates cell fate specification and competence before the onset of neural induction. Expression in the entire ectodermal region prior to gastrulation might act to prevent fate specification in the ectoderm and ensure the maintenance of the stem-cell-like properties exhibited by ectodermal cells. This chain is DAN domain family member 5 (dand5), found in Xenopus tropicalis (Western clawed frog).